Consider the following 342-residue polypeptide: UDP-N-acetylglucosamine--N-acetylmuramyl-(pentapeptide) pyrophosphoryl-undecaprenol N-acetylglucosamine transferase (342 aa).

UDP-N-acetyl-alpha-D-glucosamine contacts are provided by residues 10–12, N124, S177, and Q275; that span reads TGG.

It belongs to the glycosyltransferase 28 family. MurG subfamily.

The protein resides in the cell inner membrane. The catalysed reaction is di-trans,octa-cis-undecaprenyl diphospho-N-acetyl-alpha-D-muramoyl-L-alanyl-D-glutamyl-meso-2,6-diaminopimeloyl-D-alanyl-D-alanine + UDP-N-acetyl-alpha-D-glucosamine = di-trans,octa-cis-undecaprenyl diphospho-[N-acetyl-alpha-D-glucosaminyl-(1-&gt;4)]-N-acetyl-alpha-D-muramoyl-L-alanyl-D-glutamyl-meso-2,6-diaminopimeloyl-D-alanyl-D-alanine + UDP + H(+). It participates in cell wall biogenesis; peptidoglycan biosynthesis. In terms of biological role, cell wall formation. Catalyzes the transfer of a GlcNAc subunit on undecaprenyl-pyrophosphoryl-MurNAc-pentapeptide (lipid intermediate I) to form undecaprenyl-pyrophosphoryl-MurNAc-(pentapeptide)GlcNAc (lipid intermediate II). The sequence is that of UDP-N-acetylglucosamine--N-acetylmuramyl-(pentapeptide) pyrophosphoryl-undecaprenol N-acetylglucosamine transferase from Campylobacter jejuni (strain RM1221).